The sequence spans 613 residues: Secretogranin-2 (613 aa).

Positions 1–27 (MAEAKTHWLGAVLSLIPLIFLLSEAEA) are cleaved as a signal peptide. Positions 28–30 (ASF) are excised as a propeptide. Disordered regions lie at residues 67–105 (QQAHKEESSPDYNPYQGVSVPLQQKENGDLPESSRDSLS) and 119–146 (QAENEPQSAPKENKPYTLNSEKNFPMDM). Residues 92–105 (ENGDLPESSRDSLS) show a composition bias toward basic and acidic residues. Y150 bears the Sulfotyrosine mark. 6 positions are modified to phosphoserine: S173, S267, S428, S528, S551, and S552. Positions 257–283 (ESQTQEEVRDSKENADKTEQINDEMKR) are enriched in basic and acidic residues. A disordered region spans residues 257–287 (ESQTQEEVRDSKENADKTEQINDEMKRSGQL). The segment covering 546–557 (HLSQHSSQETDK) has biased composition (basic and acidic residues). Positions 546–580 (HLSQHSSQETDKLASVSKRLPVGTPKSDDTPNRPY) are disordered.

It belongs to the chromogranin/secretogranin protein family. Interacts with Secretogranin III/SCG3. As to expression, highest levels detected in anterior pituitary followed by adrenal medulla and posterior pituitary (at protein level). In the brain, high levels are found in the hypothalamus, comparable to those present in posterior pituitary with two- to six-fold lower levels present in the other brain regions investigated including caudate nucleus, hippocampus, thalamus and brainstem (at protein level).

The protein localises to the secreted. Neuroendocrine protein of the granin family that regulates the biogenesis of secretory granules. In Bos taurus (Bovine), this protein is Secretogranin-2 (SCG2).